We begin with the raw amino-acid sequence, 624 residues long: tRNA uridine 5-carboxymethylaminomethyl modification enzyme MnmG (624 aa).

FAD-binding positions include 16-21 (GAGHAG), Val128, and Ser183. An NAD(+)-binding site is contributed by 275 to 289 (GPRYCPSIEDKVVRF). Gln372 contributes to the FAD binding site.

It belongs to the MnmG family. In terms of assembly, homodimer. Heterotetramer of two MnmE and two MnmG subunits. The cofactor is FAD.

It is found in the cytoplasm. NAD-binding protein involved in the addition of a carboxymethylaminomethyl (cmnm) group at the wobble position (U34) of certain tRNAs, forming tRNA-cmnm(5)s(2)U34. The chain is tRNA uridine 5-carboxymethylaminomethyl modification enzyme MnmG from Geobacter metallireducens (strain ATCC 53774 / DSM 7210 / GS-15).